The following is a 363-amino-acid chain: S-adenosylmethionine:tRNA ribosyltransferase-isomerase (363 aa).

This sequence belongs to the QueA family. As to quaternary structure, monomer.

It is found in the cytoplasm. It catalyses the reaction 7-aminomethyl-7-carbaguanosine(34) in tRNA + S-adenosyl-L-methionine = epoxyqueuosine(34) in tRNA + adenine + L-methionine + 2 H(+). It functions in the pathway tRNA modification; tRNA-queuosine biosynthesis. In terms of biological role, transfers and isomerizes the ribose moiety from AdoMet to the 7-aminomethyl group of 7-deazaguanine (preQ1-tRNA) to give epoxyqueuosine (oQ-tRNA). This chain is S-adenosylmethionine:tRNA ribosyltransferase-isomerase, found in Mannheimia succiniciproducens (strain KCTC 0769BP / MBEL55E).